The primary structure comprises 256 residues: 5-keto-4-deoxy-D-glucarate aldolase (256 aa).

Histidine 50 serves as the catalytic Proton acceptor. Residue glutamine 151 participates in substrate binding. Mg(2+) is bound at residue glutamate 153. 2 residues coordinate substrate: serine 178 and aspartate 179. Mg(2+) is bound at residue aspartate 179.

This sequence belongs to the HpcH/HpaI aldolase family. KDGluc aldolase subfamily. As to quaternary structure, homohexamer; trimer of dimers. Requires Mg(2+) as cofactor.

The catalysed reaction is 5-dehydro-4-deoxy-D-glucarate = 2-hydroxy-3-oxopropanoate + pyruvate. The enzyme catalyses 2-dehydro-3-deoxy-D-glucarate = 2-hydroxy-3-oxopropanoate + pyruvate. Its pathway is carbohydrate acid metabolism; galactarate degradation; D-glycerate from galactarate: step 2/3. Functionally, catalyzes the reversible retro-aldol cleavage of both 5-keto-4-deoxy-D-glucarate and 2-keto-3-deoxy-D-glucarate to pyruvate and tartronic semialdehyde. This is 5-keto-4-deoxy-D-glucarate aldolase from Klebsiella pneumoniae subsp. pneumoniae (strain ATCC 700721 / MGH 78578).